Consider the following 175-residue polypeptide: Large ribosomal subunit protein uL10 (175 aa).

The protein belongs to the universal ribosomal protein uL10 family. As to quaternary structure, part of the ribosomal stalk of the 50S ribosomal subunit. The N-terminus interacts with L11 and the large rRNA to form the base of the stalk. The C-terminus forms an elongated spine to which L12 dimers bind in a sequential fashion forming a multimeric L10(L12)X complex.

Functionally, forms part of the ribosomal stalk, playing a central role in the interaction of the ribosome with GTP-bound translation factors. The protein is Large ribosomal subunit protein uL10 of Prochlorococcus marinus (strain AS9601).